Here is a 296-residue protein sequence, read N- to C-terminus: Giardin subunit alpha-3 (296 aa).

Annexin repeat units follow at residues Asp-3–Trp-72, Glu-74–Lys-146, Asn-153–Tyr-222, and Gly-226–Arg-295.

Belongs to the annexin family. Giardin subunit alpha subfamily.

The protein resides in the cytoplasm. The protein localises to the cytoskeleton. Giardins are involved in parasite attachment to the intestinal mucosa and in the cytoskeletal disassembly and reassembly that marks the transition from infectious trophozoite to transmissible cyst. They may interact with other cytoskeletal proteins such as microtubules in the microribbons or crossbridges, to maintain the integrity of the ventral disk. The protein is Giardin subunit alpha-3 of Giardia intestinalis (Giardia lamblia).